We begin with the raw amino-acid sequence, 566 residues long: MKTIIALSYIFCLVFAQNLPGNDKSTATLCLGHHAVPNGTLVKTITNDQIEVTNATELVQSSSTGRICDSPHRILDGKNCTLVDALLGDPHCDGFQNEKWDLFVERSKAFSNCYPYDVPDYASLRSLVASSGTLEFINESFNWTGVTQSGGSYACKRGSDNSFFSRLNWLYESESKYPVLNVTMPNNGNFDKLYIWGVHHPSTDKEQTNLYVRASGRVTVSTKRSQQTIIPNIGSRPWVRGLSSRISIYWTIVKPGDILLINSNGNLIAPRGYFKIRTGKSSIMRSDAPIGTCSSECITPNGSIPNDKPFQNVNKITYGACPKYVKQNTLKLATGMRNVPEKQTRGIFGAIAGFIENGWEGMVDGWYGFRHQNSEGTGQAADLKSTQAAIDQINGKLNRVIEKTNEKFHQIEKEFSEVEGRIQDLEKYVEDTKIDLWSYNAELLVALENQHTIDLTDSEMNKLFEKTRRQLRENAEDMGNGCFKIYHKCDNACIGSIRNGTYDHDVYRDEALNNRFQIKGVELKSGYKDWILWISFAISCFLLCVVLLGFIMWACQKGNIRCNICI.

The first 16 residues, 1-16 (MKTIIALSYIFCLVFA), serve as a signal peptide directing secretion. At 17 to 530 (QNLPGNDKST…VELKSGYKDW (514 aa)) the chain is on the extracellular side. 6 cysteine pairs are disulfide-bonded: Cys30-Cys482, Cys68-Cys293, Cys80-Cys92, Cys113-Cys155, Cys297-Cys321, and Cys489-Cys493. 3 N-linked (GlcNAc...) asparagine; by host glycosylation sites follow: Asn38, Asn54, and Asn79. N-linked (GlcNAc...) asparagine; by host glycans are attached at residues Asn138, Asn142, Asn181, and Asn301. Asn499 carries N-linked (GlcNAc...) asparagine; by host glycosylation. Residues 531–551 (ILWISFAISCFLLCVVLLGFI) traverse the membrane as a helical segment. At 552–566 (MWACQKGNIRCNICI) the chain is on the cytoplasmic side. Residues Cys555, Cys562, and Cys565 are each lipidated (S-palmitoyl cysteine; by host).

It belongs to the influenza viruses hemagglutinin family. Homotrimer of disulfide-linked HA1-HA2. In terms of processing, palmitoylated. In natural infection, inactive HA is matured into HA1 and HA2 outside the cell by one or more trypsin-like, arginine-specific endoprotease secreted by the bronchial epithelial cells. One identified protease that may be involved in this process is secreted in lungs by club cells.

It is found in the virion membrane. The protein localises to the host apical cell membrane. Its function is as follows. Binds to sialic acid-containing receptors on the cell surface, bringing about the attachment of the virus particle to the cell. This attachment induces virion internalization either through clathrin-dependent endocytosis or through clathrin- and caveolin-independent pathway. Plays a major role in the determination of host range restriction and virulence. Class I viral fusion protein. Responsible for penetration of the virus into the cell cytoplasm by mediating the fusion of the membrane of the endocytosed virus particle with the endosomal membrane. Low pH in endosomes induces an irreversible conformational change in HA2, releasing the fusion hydrophobic peptide. Several trimers are required to form a competent fusion pore. The chain is Hemagglutinin from Influenza A virus (strain A/Memphis/4/1980 H3N2).